The following is a 249-amino-acid chain: tRNA pseudouridine synthase A (249 aa).

Aspartate 52 acts as the Nucleophile in catalysis. Residue tyrosine 111 participates in substrate binding.

This sequence belongs to the tRNA pseudouridine synthase TruA family. Homodimer.

It carries out the reaction uridine(38/39/40) in tRNA = pseudouridine(38/39/40) in tRNA. Its function is as follows. Formation of pseudouridine at positions 38, 39 and 40 in the anticodon stem and loop of transfer RNAs. In Caulobacter sp. (strain K31), this protein is tRNA pseudouridine synthase A.